Reading from the N-terminus, the 455-residue chain is Ribosomal protein uS12 methylthiotransferase RimO (455 aa).

The region spanning 30-140 (PTIGMVSLGC…VLDAVHGAVP (111 aa)) is the MTTase N-terminal domain. [4Fe-4S] cluster-binding residues include Cys39, Cys75, Cys104, Cys171, Cys175, and Cys178. One can recognise a Radical SAM core domain in the interval 157–386 (LTPRHFSYLK…MEKAQAISEV (230 aa)). In terms of domain architecture, TRAM spans 389–455 (AAKVGRRIEV…GEYDIWGRPV (67 aa)).

The protein belongs to the methylthiotransferase family. RimO subfamily. [4Fe-4S] cluster serves as cofactor.

It localises to the cytoplasm. The catalysed reaction is L-aspartate(89)-[ribosomal protein uS12]-hydrogen + (sulfur carrier)-SH + AH2 + 2 S-adenosyl-L-methionine = 3-methylsulfanyl-L-aspartate(89)-[ribosomal protein uS12]-hydrogen + (sulfur carrier)-H + 5'-deoxyadenosine + L-methionine + A + S-adenosyl-L-homocysteine + 2 H(+). In terms of biological role, catalyzes the methylthiolation of an aspartic acid residue of ribosomal protein uS12. This Cereibacter sphaeroides (strain ATCC 17023 / DSM 158 / JCM 6121 / CCUG 31486 / LMG 2827 / NBRC 12203 / NCIMB 8253 / ATH 2.4.1.) (Rhodobacter sphaeroides) protein is Ribosomal protein uS12 methylthiotransferase RimO.